The primary structure comprises 507 residues: Probable allantoinase (507 aa).

Zn(2+) contacts are provided by H105, H107, K195, H231, H294, and D368. K195 carries the N6-carboxylysine modification.

It belongs to the metallo-dependent hydrolases superfamily. Allantoinase family. Homotetramer. Requires Zn(2+) as cofactor. Carboxylation allows a single lysine to coordinate two zinc ions.

It catalyses the reaction (S)-allantoin + H2O = allantoate + H(+). Its pathway is nitrogen metabolism; (S)-allantoin degradation; allantoate from (S)-allantoin: step 1/1. Functionally, catalyzes the conversion of allantoin (5-ureidohydantoin) to allantoate by hydrolytic cleavage of the five-member hydantoin ring. Catalyzes the first step of the ureide allantoin degradation followed by the sequential activity of AAH, UGLYAH and UAH which allows a complete purine breakdown without the intermediate generation of urea. In Oryza sativa subsp. japonica (Rice), this protein is Probable allantoinase (ALN).